A 42-amino-acid polypeptide reads, in one-letter code: Photosystem II reaction center protein J (42 aa).

Residues 10–30 traverse the membrane as a helical segment; sequence IPLWLIGTVVGSLAIGLLAIF.

The protein belongs to the PsbJ family. In terms of assembly, PSII is composed of 1 copy each of membrane proteins PsbA, PsbB, PsbC, PsbD, PsbE, PsbF, PsbH, PsbI, PsbJ, PsbK, PsbL, PsbM, PsbT, PsbX, PsbY, PsbZ, Psb30/Ycf12, at least 3 peripheral proteins of the oxygen-evolving complex and a large number of cofactors. It forms dimeric complexes.

It localises to the plastid. It is found in the chloroplast thylakoid membrane. One of the components of the core complex of photosystem II (PSII). PSII is a light-driven water:plastoquinone oxidoreductase that uses light energy to abstract electrons from H(2)O, generating O(2) and a proton gradient subsequently used for ATP formation. It consists of a core antenna complex that captures photons, and an electron transfer chain that converts photonic excitation into a charge separation. The protein is Photosystem II reaction center protein J of Stigeoclonium helveticum (Green alga).